The following is a 185-amino-acid chain: MTIEIQAQQRADQGSSASRRLRRAGVVPGVVYGAGKAAVAISFDHNTLYYALQKEGFHSSILNLVIDGATEQVFVRDVQMHAFKPQVQHIDFQRVDANTVIEAKVPFKFINGEISPAVKMNGKIIGHLLNAAVVRCLPANLPAAIEVDLSTLVAGESVHLSSIKLPEGVEFASLRSGKDLSVARA.

The protein belongs to the bacterial ribosomal protein bL25 family. CTC subfamily. Part of the 50S ribosomal subunit; part of the 5S rRNA/L5/L18/L25 subcomplex. Contacts the 5S rRNA. Binds to the 5S rRNA independently of L5 and L18.

In terms of biological role, this is one of the proteins that binds to the 5S RNA in the ribosome where it forms part of the central protuberance. The polypeptide is Large ribosomal subunit protein bL25 (Laribacter hongkongensis (strain HLHK9)).